Consider the following 293-residue polypeptide: Taste receptor type 2 member 143 (293 aa).

At 1-6 (MPSTPT) the chain is on the extracellular side. The chain crosses the membrane as a helical span at residues 7-27 (LIFIIIFYLVSLASMLQNGFM). The Cytoplasmic portion of the chain corresponds to 28–55 (MIVLGREWMRNRTLPAADMIVASLASSR). The helical transmembrane segment at 56 to 76 (FCLHGIAILANLLASFDFCYQ) threads the bilayer. At 77-79 (ANL) the chain is on the extracellular side. A helical membrane pass occupies residues 80-100 (IGILWDFTNTLIFWLTAWLAI). Over 101-127 (FYCVKISSFSHPVLFWLKWRISQLVPR) the chain is Cytoplasmic. The chain crosses the membrane as a helical span at residues 128-148 (LLVVSLIIGGLSAVISATGNF). Residues 149–181 (MANQMTISQGFHGNCTFGHMSLDFYRYYYLYHS) lie on the Extracellular side of the membrane. An N-linked (GlcNAc...) asparagine glycan is attached at Asn-162. Residues 182 to 202 (VLMWFTPFFLFLVSVIVLMFS) form a helical membrane-spanning segment. At 203–227 (LYQHVEKMRGHRPGPWDLHTQAHTM) the chain is on the cytoplasmic side. Residues 228 to 248 (ALKSLTFFFIFYIFFFLALVI) traverse the membrane as a helical segment. Topologically, residues 249–264 (SSTKRKSMQSYYWARE) are extracellular. A helical membrane pass occupies residues 265 to 285 (AIIYTGIFLNSIILLFSNPKL). Topologically, residues 286–293 (RKALKMRF) are cytoplasmic.

Belongs to the G-protein coupled receptor T2R family.

It localises to the membrane. Functionally, putative taste receptor which may play a role in the perception of bitterness. In Mus musculus (Mouse), this protein is Taste receptor type 2 member 143 (Tas2r143).